A 154-amino-acid chain; its full sequence is Protein-export protein SecB (154 aa).

This sequence belongs to the SecB family. In terms of assembly, homotetramer, a dimer of dimers. One homotetramer interacts with 1 SecA dimer.

The protein resides in the cytoplasm. In terms of biological role, one of the proteins required for the normal export of preproteins out of the cell cytoplasm. It is a molecular chaperone that binds to a subset of precursor proteins, maintaining them in a translocation-competent state. It also specifically binds to its receptor SecA. The polypeptide is Protein-export protein SecB (Buchnera aphidicola subsp. Schizaphis graminum (strain Sg)).